Here is a 67-residue protein sequence, read N- to C-terminus: U-myrmeciitoxin(01)-Mg4a (67 aa).

Positions 1-25 (MGKVFFFVLMIAIIGSTFLIEEALG) are cleaved as a signal peptide.

It belongs to the ant myrmeciitoxin-01 family. Homodimer; disulfide-linked. In terms of processing, contains 2 intrachain disulfide bonds (one per chain) and 1 interchain disulfide bond. Expressed by the venom gland.

It is found in the secreted. This chain is U-myrmeciitoxin(01)-Mg4a, found in Myrmecia gulosa (Red bulldog ant).